We begin with the raw amino-acid sequence, 318 residues long: Cephalosporin-C deacetylase (318 aa).

A substrate-binding site is contributed by Tyr91. Residue Ser181 is the Nucleophile of the active site. Catalysis depends on charge relay system residues Asp269 and His298.

It belongs to the carbohydrate esterase 7 family. In terms of assembly, homohexamer.

Its subcellular location is the cytoplasm. It catalyses the reaction Deacetylation of xylans and xylo-oligosaccharides.. It carries out the reaction cephalosporin C + H2O = deacetylcephalosporin C + acetate + H(+). Esterase that removed acetyl groups from a number of O-acetylated small substrates, such as acetylated xylose, short xylooligosaccharides and cephalosporin C. Has no activity towards polymeric acetylated xylan. Cannot cleave amide linkages. The sequence is that of Cephalosporin-C deacetylase (cah) from Bacillus subtilis (strain 168).